Consider the following 90-residue polypeptide: Putative Fis-like DNA-binding protein (90 aa).

The H-T-H motif DNA-binding region spans 66–85 (QSRAAALLGIHRATLRKKLK).

It belongs to the transcriptional regulatory Fis family.

This chain is Putative Fis-like DNA-binding protein, found in Xylella fastidiosa (strain 9a5c).